A 376-amino-acid chain; its full sequence is MAIKVLVVDDSSFFRRRVSEIINSDPRLEVIDVAVNGKEAVEKAKSLKPDVITMDIEMPVMDGISAVREIMKACPTPTLMFSSLTHDGAKATLDALDAGALDFLPKKFEDIARNRDEAVSLLQKRIAEIARKKSFMRRPVLSSQSTSTVESRTATTRTATSALTASPVKAAPAAPIAQRFKATGKKYQLTAIGTSTGGPVALQKILTAIPANYPHPIILVQHMPATFTAAFAARLNNLCKIQVKEAEDGDVLKPGCAYLAPGGLQMMVDGRPGASRLKILDGGERMNYKPCVDVTFGSAAKVYGDKVLSMILTGMGADGREGCRMLKAGGATIWSQDEQSCVVYGMPQAVDKAGLSSESLPLDRIAERMLVEVGLK.

Residues 4–121 form the Response regulatory domain; that stretch reads KVLVVDDSSF…ARNRDEAVSL (118 aa). 4-aspartylphosphate is present on Asp-55. A disordered region spans residues 142–161; sequence SSQSTSTVESRTATTRTATS. The span at 145 to 161 shows a compositional bias: low complexity; the sequence is STSTVESRTATTRTATS. Residues 183–376 form the CheB-type methylesterase domain; that stretch reads TGKKYQLTAI…ERMLVEVGLK (194 aa). Active-site residues include Ser-195, His-222, and Asp-318.

It belongs to the CheB family. Post-translationally, phosphorylated by CheA. Phosphorylation of the N-terminal regulatory domain activates the methylesterase activity.

It is found in the cytoplasm. The enzyme catalyses [protein]-L-glutamate 5-O-methyl ester + H2O = L-glutamyl-[protein] + methanol + H(+). It catalyses the reaction L-glutaminyl-[protein] + H2O = L-glutamyl-[protein] + NH4(+). Involved in chemotaxis. Part of a chemotaxis signal transduction system that modulates chemotaxis in response to various stimuli. Catalyzes the demethylation of specific methylglutamate residues introduced into the chemoreceptors (methyl-accepting chemotaxis proteins or MCP) by CheR. Also mediates the irreversible deamidation of specific glutamine residues to glutamic acid. This Aliivibrio fischeri (strain ATCC 700601 / ES114) (Vibrio fischeri) protein is Protein-glutamate methylesterase/protein-glutamine glutaminase.